Here is a 321-residue protein sequence, read N- to C-terminus: Tetraacyldisaccharide 4'-kinase (321 aa).

54-61 lines the ATP pocket; that stretch reads SVGGTGKT.

This sequence belongs to the LpxK family.

It carries out the reaction a lipid A disaccharide + ATP = a lipid IVA + ADP + H(+). It participates in glycolipid biosynthesis; lipid IV(A) biosynthesis; lipid IV(A) from (3R)-3-hydroxytetradecanoyl-[acyl-carrier-protein] and UDP-N-acetyl-alpha-D-glucosamine: step 6/6. Functionally, transfers the gamma-phosphate of ATP to the 4'-position of a tetraacyldisaccharide 1-phosphate intermediate (termed DS-1-P) to form tetraacyldisaccharide 1,4'-bis-phosphate (lipid IVA). The protein is Tetraacyldisaccharide 4'-kinase of Rickettsia typhi (strain ATCC VR-144 / Wilmington).